Reading from the N-terminus, the 165-residue chain is SsrA-binding protein (165 aa).

Residues 141-165 (KLHDKRQEEKRKQADREVKSALARY) are disordered. The span at 145-159 (KRQEEKRKQADREVK) shows a compositional bias: basic and acidic residues.

The protein belongs to the SmpB family.

The protein localises to the cytoplasm. Required for rescue of stalled ribosomes mediated by trans-translation. Binds to transfer-messenger RNA (tmRNA), required for stable association of tmRNA with ribosomes. tmRNA and SmpB together mimic tRNA shape, replacing the anticodon stem-loop with SmpB. tmRNA is encoded by the ssrA gene; the 2 termini fold to resemble tRNA(Ala) and it encodes a 'tag peptide', a short internal open reading frame. During trans-translation Ala-aminoacylated tmRNA acts like a tRNA, entering the A-site of stalled ribosomes, displacing the stalled mRNA. The ribosome then switches to translate the ORF on the tmRNA; the nascent peptide is terminated with the 'tag peptide' encoded by the tmRNA and targeted for degradation. The ribosome is freed to recommence translation, which seems to be the essential function of trans-translation. This is SsrA-binding protein from Prochlorococcus marinus (strain MIT 9303).